Consider the following 188-residue polypeptide: Elongation factor P-like protein (188 aa).

It belongs to the elongation factor P family.

This is Elongation factor P-like protein from Xylella fastidiosa (strain M12).